The following is a 284-amino-acid chain: Bifunctional protein FolD (284 aa).

NADP(+) contacts are provided by residues 165–167 and S190; that span reads GRS.

The protein belongs to the tetrahydrofolate dehydrogenase/cyclohydrolase family. In terms of assembly, homodimer.

The enzyme catalyses (6R)-5,10-methylene-5,6,7,8-tetrahydrofolate + NADP(+) = (6R)-5,10-methenyltetrahydrofolate + NADPH. The catalysed reaction is (6R)-5,10-methenyltetrahydrofolate + H2O = (6R)-10-formyltetrahydrofolate + H(+). The protein operates within one-carbon metabolism; tetrahydrofolate interconversion. In terms of biological role, catalyzes the oxidation of 5,10-methylenetetrahydrofolate to 5,10-methenyltetrahydrofolate and then the hydrolysis of 5,10-methenyltetrahydrofolate to 10-formyltetrahydrofolate. The polypeptide is Bifunctional protein FolD (Streptococcus equi subsp. zooepidemicus (strain MGCS10565)).